Consider the following 351-residue polypeptide: Nicotinate-nucleotide--dimethylbenzimidazole phosphoribosyltransferase (351 aa).

Glu-315 (proton acceptor) is an active-site residue.

The protein belongs to the CobT family.

It catalyses the reaction 5,6-dimethylbenzimidazole + nicotinate beta-D-ribonucleotide = alpha-ribazole 5'-phosphate + nicotinate + H(+). Its pathway is nucleoside biosynthesis; alpha-ribazole biosynthesis; alpha-ribazole from 5,6-dimethylbenzimidazole: step 1/2. In terms of biological role, catalyzes the synthesis of alpha-ribazole-5'-phosphate from nicotinate mononucleotide (NAMN) and 5,6-dimethylbenzimidazole (DMB). The protein is Nicotinate-nucleotide--dimethylbenzimidazole phosphoribosyltransferase of Acetivibrio thermocellus (strain ATCC 27405 / DSM 1237 / JCM 9322 / NBRC 103400 / NCIMB 10682 / NRRL B-4536 / VPI 7372) (Clostridium thermocellum).